A 328-amino-acid polypeptide reads, in one-letter code: Arylacetonitrilase (328 aa).

The region spanning 5-278 (VRVAVTQAEP…EGIIYADLDL (274 aa)) is the CN hydrolase domain. Glu-45 serves as the catalytic Proton acceptor. Residue Lys-125 is part of the active site. Cys-160 functions as the Nucleophile in the catalytic mechanism.

Belongs to the carbon-nitrogen hydrolase superfamily. Nitrilase family.

The enzyme catalyses a nitrile + 2 H2O = a carboxylate + NH4(+). The catalysed reaction is 4-chlorophenylacetonitrile + 2 H2O = 4-chlorophenylacetate + NH4(+). Nitrilase that hydrolyzes preferentially phenylacetonitrile and (R,S)-mandelonitrile. Also acts on dinitriles like phenylenediacetonitriles (PDAs) 1,2-PDA, 1,3-PDA, and 1,4-PDA, and cyanophenyl acetonitriles (CPAs) 2-CPA and 4-CPA. This Aspergillus kawachii (strain NBRC 4308) (White koji mold) protein is Arylacetonitrilase (nit2).